Consider the following 870-residue polypeptide: Leucine--tRNA ligase (870 aa).

Residues 42–52 carry the 'HIGH' region motif; sequence PYPSGKLHMGH. The short motif at 629–633 is the 'KMSKS' region element; the sequence is KMSKS. ATP is bound at residue lysine 632.

The protein belongs to the class-I aminoacyl-tRNA synthetase family.

The protein localises to the cytoplasm. It carries out the reaction tRNA(Leu) + L-leucine + ATP = L-leucyl-tRNA(Leu) + AMP + diphosphate. The chain is Leucine--tRNA ligase from Ectopseudomonas mendocina (strain ymp) (Pseudomonas mendocina).